The chain runs to 308 residues: Glutamyl-Q tRNA(Asp) synthetase (308 aa).

L-glutamate is bound by residues 19-23 (RFAPS) and Glu-55. Positions 22 to 32 (PSPSGELHFGS) match the 'HIGH' region motif. Residues Cys-111, Cys-113, Tyr-125, and Cys-129 each coordinate Zn(2+). L-glutamate contacts are provided by Tyr-182 and Arg-200. The 'KMSKS' region signature appears at 238–242 (KLSKQ). Lys-241 contacts ATP.

Belongs to the class-I aminoacyl-tRNA synthetase family. GluQ subfamily. Zn(2+) is required as a cofactor.

Catalyzes the tRNA-independent activation of glutamate in presence of ATP and the subsequent transfer of glutamate onto a tRNA(Asp). Glutamate is transferred on the 2-amino-5-(4,5-dihydroxy-2-cyclopenten-1-yl) moiety of the queuosine in the wobble position of the QUC anticodon. This is Glutamyl-Q tRNA(Asp) synthetase from Escherichia coli O6:H1 (strain CFT073 / ATCC 700928 / UPEC).